We begin with the raw amino-acid sequence, 97 residues long: Aspartyl/glutamyl-tRNA(Asn/Gln) amidotransferase subunit C (97 aa).

It belongs to the GatC family. As to quaternary structure, heterotrimer of A, B and C subunits.

It carries out the reaction L-glutamyl-tRNA(Gln) + L-glutamine + ATP + H2O = L-glutaminyl-tRNA(Gln) + L-glutamate + ADP + phosphate + H(+). It catalyses the reaction L-aspartyl-tRNA(Asn) + L-glutamine + ATP + H2O = L-asparaginyl-tRNA(Asn) + L-glutamate + ADP + phosphate + 2 H(+). Its function is as follows. Allows the formation of correctly charged Asn-tRNA(Asn) or Gln-tRNA(Gln) through the transamidation of misacylated Asp-tRNA(Asn) or Glu-tRNA(Gln) in organisms which lack either or both of asparaginyl-tRNA or glutaminyl-tRNA synthetases. The reaction takes place in the presence of glutamine and ATP through an activated phospho-Asp-tRNA(Asn) or phospho-Glu-tRNA(Gln). The chain is Aspartyl/glutamyl-tRNA(Asn/Gln) amidotransferase subunit C from Prochlorococcus marinus (strain AS9601).